Here is a 195-residue protein sequence, read N- to C-terminus: 3-isopropylmalate dehydratase small subunit (195 aa).

Belongs to the LeuD family. LeuD type 1 subfamily. As to quaternary structure, heterodimer of LeuC and LeuD.

The catalysed reaction is (2R,3S)-3-isopropylmalate = (2S)-2-isopropylmalate. The protein operates within amino-acid biosynthesis; L-leucine biosynthesis; L-leucine from 3-methyl-2-oxobutanoate: step 2/4. Its function is as follows. Catalyzes the isomerization between 2-isopropylmalate and 3-isopropylmalate, via the formation of 2-isopropylmaleate. The protein is 3-isopropylmalate dehydratase small subunit of Thermobifida fusca (strain YX).